The following is a 133-amino-acid chain: Probable non-specific lipid-transfer protein 2 (133 aa).

An N-terminal signal peptide occupies residues 1–31 (MRTVSMAALVVIAAALAWTSSAELASAPAPG). 4 disulfide bridges follow: Cys-35-Cys-83, Cys-45-Cys-60, Cys-61-Cys-106, and Cys-81-Cys-121.

The protein belongs to the plant LTP family.

Its function is as follows. Plant non-specific lipid-transfer proteins transfer phospholipids as well as galactolipids across membranes. May play a role in wax or cutin deposition in the cell walls of expanding epidermal cells and certain secretory tissues. The sequence is that of Probable non-specific lipid-transfer protein 2 from Parietaria judaica (Pellitory-of-the-wall).